The sequence spans 125 residues: Fluoride-specific ion channel FluC (125 aa).

The next 4 helical transmembrane spans lie at 6 to 26 (AWIALAGAGGTLSRYALSGLV), 36 to 56 (WGTWVVNGLGCFLFGMIWALA), 68 to 88 (FIVLTGFMGAFTTFSTFAFEA), and 97 to 117 (WLLAAIHLIGQNSLGLVCVFL). Na(+) is bound by residues G76 and T79.

This sequence belongs to the fluoride channel Fluc/FEX (TC 1.A.43) family.

Its subcellular location is the cell inner membrane. The enzyme catalyses fluoride(in) = fluoride(out). Na(+) is not transported, but it plays an essential structural role and its presence is essential for fluoride channel function. Its function is as follows. Fluoride-specific ion channel. Important for reducing fluoride concentration in the cell, thus reducing its toxicity. This Nitrosococcus oceani (strain ATCC 19707 / BCRC 17464 / JCM 30415 / NCIMB 11848 / C-107) protein is Fluoride-specific ion channel FluC.